The sequence spans 878 residues: Alanine--tRNA ligase (878 aa).

4 residues coordinate Zn(2+): histidine 571, histidine 575, cysteine 673, and histidine 677.

Belongs to the class-II aminoacyl-tRNA synthetase family. Requires Zn(2+) as cofactor.

The protein localises to the cytoplasm. The enzyme catalyses tRNA(Ala) + L-alanine + ATP = L-alanyl-tRNA(Ala) + AMP + diphosphate. Catalyzes the attachment of alanine to tRNA(Ala) in a two-step reaction: alanine is first activated by ATP to form Ala-AMP and then transferred to the acceptor end of tRNA(Ala). Also edits incorrectly charged Ser-tRNA(Ala) and Gly-tRNA(Ala) via its editing domain. This Syntrophus aciditrophicus (strain SB) protein is Alanine--tRNA ligase.